The primary structure comprises 280 residues: BURP domain protein USPL1 (280 aa).

The first 24 residues, 1–24, serve as a signal peptide directing secretion; sequence MASTFRLSISFLTLILFSLWVVEA. The BURP domain occupies 58 to 280; that stretch reads YFTLNDLKLG…PLDNIVWVTK (223 aa).

As to expression, expressed in cotyledons, radicle, floral buds, open flowers, roots and developing seeds, but not in leaves. Highly expressed in the root tips. Detected in young leaves, hypocotyls, stems and mature seed funiculum.

The protein resides in the protein storage vacuole. It is found in the golgi apparatus. It localises to the golgi stack. Its subcellular location is the trans-Golgi network. The protein localises to the prevacuolar compartment. Associated with the protein storage vacuole formation. The polypeptide is BURP domain protein USPL1 (Arabidopsis thaliana (Mouse-ear cress)).